The chain runs to 450 residues: Hydrolase ffsE (450 aa).

Ser-266 acts as the Nucleophile in catalysis.

It belongs to the AB hydrolase superfamily. FUS2 hydrolase family. Homodimer.

It participates in mycotoxin biosynthesis. Hydrolase; part of the gene cluster that mediates the biosynthesis of the cytotoxic leucine-containing cytochalasans, including aspochalasin C, aspochalasin E, TMC-169, flavichalasine F, aspergillin PZ, aspochalasin M and flavichalasine G. The first step in the pathway is catalyzed by the hybrid PKS-NRPS ffsA that utilizes 8 units of malonyl-CoA to iteratively assemble the octaketide chain before addition of L-leucine by the C-terminal NRPS modules. Because ffsA lacks a designated enoylreductase (ER) domain, the required activity is provided the enoyl reductase fssC. The methyltransferase (MT) domain of ffsA catalyzes the alpha-methylation at C10 and C14 using S-adenosyl-L-methionine as the methyl-donating cosubstrate. Reduction by the hydrolyase ffsE, followed by dehydration and intra-molecular Diels-Alder cyclization by the Diels-Alderase ffsF then yield the required isoindolone-fused macrocycle. A number of oxidative steps catalyzed by the tailoring cytochrome P450 monooxygenase ffsD, the FAD-linked oxidoreductase ffsJ and the short-chain dehydrogenase/reductase ffsI, are further required to afford the final products. The polypeptide is Hydrolase ffsE (Aspergillus flavipes).